A 144-amino-acid polypeptide reads, in one-letter code: Putative pre-16S rRNA nuclease (144 aa).

This sequence belongs to the YqgF nuclease family.

It localises to the cytoplasm. Its function is as follows. Could be a nuclease involved in processing of the 5'-end of pre-16S rRNA. This is Putative pre-16S rRNA nuclease from Oenococcus oeni (strain ATCC BAA-331 / PSU-1).